The following is a 42-amino-acid chain: Cytochrome b6-f complex subunit 7 (42 aa).

The helical transmembrane segment at 15–35 threads the bilayer; that stretch reads IVTAAVTCIFMVLFGLSLGFA.

This sequence belongs to the PetM family. As to quaternary structure, the 4 large subunits of the cytochrome b6-f complex are cytochrome b6, subunit IV (17 kDa polypeptide, PetD), cytochrome f and the Rieske protein, while the 4 small subunits are PetG, PetL, PetM and PetN. The complex functions as a dimer.

Its subcellular location is the plastid. It localises to the chloroplast thylakoid membrane. Functionally, component of the cytochrome b6-f complex, which mediates electron transfer between photosystem II (PSII) and photosystem I (PSI), cyclic electron flow around PSI, and state transitions. The polypeptide is Cytochrome b6-f complex subunit 7 (Trieres chinensis (Marine centric diatom)).